A 108-amino-acid polypeptide reads, in one-letter code: Phosphocarrier protein HPr (108 aa).

Positions 21–108 (ELQATCIVKN…DAFSSGFGEL (88 aa)) constitute an HPr domain. Residue His35 is the Pros-phosphohistidine intermediate of the active site.

This sequence belongs to the HPr family.

The protein resides in the cytoplasm. General (non sugar-specific) component of the phosphoenolpyruvate-dependent sugar phosphotransferase system (sugar PTS). This major carbohydrate active-transport system catalyzes the phosphorylation of incoming sugar substrates concomitantly with their translocation across the cell membrane. The phosphoryl group from phosphoenolpyruvate (PEP) is transferred to the phosphoryl carrier protein HPr by enzyme I. Phospho-HPr then transfers it to the PTS EIIA domain. This chain is Phosphocarrier protein HPr (ptsH), found in Chlamydia pneumoniae (Chlamydophila pneumoniae).